Reading from the N-terminus, the 871-residue chain is Phosphoinositide 3-kinase regulatory subunit 5 (871 aa).

Methionine 1 bears the N-acetylmethionine mark. The tract at residues 25 to 101 (SLGRRSAPWS…TPHFPPDSDL (77 aa)) is heterodimerization. Residues 381 to 413 (MDSGYVEDSEENSEWPQKPGSQKRQGHRRPGQK) form a disordered region. 2 positions are modified to phosphoserine: serine 451 and serine 500. The interval 646-746 (PILADMLLYY…WSNLEKVCTS (101 aa)) is interaction with beta-gamma G protein dimers.

In terms of assembly, heterodimer of a catalytic subunit (PIK3CG/p120) and a regulatory (PIK3R5a/p101) subunit. Interacts with beta-gamma G protein dimers.

Its subcellular location is the nucleus. It is found in the cytoplasm. The protein resides in the cell membrane. Greatly activated by G gamma proteins. Regulatory subunit of the PI3K gamma complex. Required for recruitment of the catalytic subunit to the plasma membrane via interaction with beta-gamma G protein dimers. Required for G protein-mediated activation of PIK3CG. In Mus musculus (Mouse), this protein is Phosphoinositide 3-kinase regulatory subunit 5 (Pik3r5).